Here is a 589-residue protein sequence, read N- to C-terminus: Coronatine-insensitive protein homolog 2 (589 aa).

Residues 18–59 form the F-box domain; the sequence is IPDVALGLVMGFVEDPWDRDAISLVCRHWCRVDALSRKHVTV. Jasmonate contacts are provided by R87, R352, R414, and R501.

Interacts with TIFY9/JAZ5, TIFY11C/JAZ11 and TIFY11D/JAZ12 in a coronatine-dependent manner.

Involved in jasmonate (JA) signaling. Required for jasmonate signaling in plant defense responses. Component of SCF(COI1) E3 ubiquitin ligase complexes, which may mediate the ubiquitination and subsequent proteasomal degradation of target proteins, including TIFY/JAZ family. The chain is Coronatine-insensitive protein homolog 2 from Oryza sativa subsp. indica (Rice).